We begin with the raw amino-acid sequence, 222 residues long: Large ribosomal subunit protein uL4 (222 aa).

The interval 50–72 (TRGRSEVSHSTRKPFRQKGTGNA) is disordered.

Belongs to the universal ribosomal protein uL4 family. In terms of assembly, part of the 50S ribosomal subunit.

One of the primary rRNA binding proteins, this protein initially binds near the 5'-end of the 23S rRNA. It is important during the early stages of 50S assembly. It makes multiple contacts with different domains of the 23S rRNA in the assembled 50S subunit and ribosome. In terms of biological role, forms part of the polypeptide exit tunnel. The sequence is that of Large ribosomal subunit protein uL4 from Chlamydia muridarum (strain MoPn / Nigg).